The following is a 75-amino-acid chain: Large ribosomal subunit protein bL31 (75 aa).

The protein belongs to the bacterial ribosomal protein bL31 family. Type A subfamily. In terms of assembly, part of the 50S ribosomal subunit.

In terms of biological role, binds the 23S rRNA. This is Large ribosomal subunit protein bL31 from Chlorobium phaeobacteroides (strain BS1).